The sequence spans 323 residues: MVCCGPGRMLLGWAGLLVLAALCLLQVPGAQAAACEPVRIPLCKSLPWNMTKMPNHLHHSTQANAILAMEQFEGLLGTHCSPDLLFFLCAMYAPICTIDFQHEPIKPCKSVCERARQGCEPILIKYRHSWPESLACDELPVYDRGVCISPEAIVTADGADFPMDSSTGHCRGASSERCKCKPVRATQKTYFRNNYNYVIRAKVKEVKMKCHDVTAVVEVKEILKASLVNIPRDTVNLYTTSGCLCPPLTVNEEYVIMGYEDEERSRLLLVEGSIAEKWKDRLGKKVKRWDMKLRHLGLGKTDASDSTQNQKSGRNSNPRPARS.

Residues 1-32 (MVCCGPGRMLLGWAGLLVLAALCLLQVPGAQA) form the signal peptide. In terms of domain architecture, FZ spans 33 to 150 (AACEPVRIPL…VYDRGVCISP (118 aa)). 5 disulfide bridges follow: cysteine 35–cysteine 96, cysteine 43–cysteine 89, cysteine 80–cysteine 119, cysteine 108–cysteine 147, and cysteine 112–cysteine 136. An N-linked (GlcNAc...) asparagine glycan is attached at asparagine 49. In terms of domain architecture, NTR spans 178–298 (CKCKPVRATQ…WDMKLRHLGL (121 aa)). The tract at residues 299 to 323 (GKTDASDSTQNQKSGRNSNPRPARS) is disordered. The segment covering 304-323 (SDSTQNQKSGRNSNPRPARS) has biased composition (polar residues).

It belongs to the secreted frizzled-related protein (sFRP) family. In terms of assembly, interacts with MYOC. In terms of tissue distribution, expressed in kidney, brain, testis. Weak expression in spleen and heart.

Its subcellular location is the secreted. Functionally, soluble frizzled-related proteins (sFRPS) function as modulators of Wnt signaling through direct interaction with Wnts. They have a role in regulating cell growth and differentiation in specific cell types. SFRP3/FRZB appears to be involved in limb skeletogenesis. Antagonist of Wnt8 signaling. Regulates chondrocyte maturation and long bone development. The protein is Secreted frizzled-related protein 3 (Frzb) of Mus musculus (Mouse).